We begin with the raw amino-acid sequence, 329 residues long: uncharacterized protein (329 aa).

The stretch at 56-247 (LNKEEQFQED…EAEKTHQAKL (192 aa)) forms a coiled coil.

This is an uncharacterized protein from Bos taurus (Bovine).